Consider the following 206-residue polypeptide: Large ribosomal subunit protein uL13 (206 aa).

It belongs to the universal ribosomal protein uL13 family.

The sequence is that of Large ribosomal subunit protein uL13 (RPL13A) from Picea mariana (Black spruce).